The chain runs to 170 residues: Non-specific lipid transfer protein GPI-anchored 5 (170 aa).

The signal sequence occupies residues 1–24 (MKMEMGLVFLTVFMAVMSSTMVSA). Intrachain disulfides connect C28–C69, C38–C53, C54–C95, and C67–C105. N45, N84, N124, and N130 each carry an N-linked (GlcNAc...) asparagine glycan. The disordered stretch occupies residues 105-148 (CNTGGGGGGSTSDSPAESPNSSGPGNGSKTVPVGEGDGPPSSDG). Residue S146 is the site of GPI-anchor amidated serine attachment. The propeptide at 147-170 (DGSSIKFSFPLIAFFSAVSYMAIF) is removed in mature form.

This sequence belongs to the plant LTP family. As to expression, expressed in seedlings, preferentially in the endodermis of hypocotyls and roots, as well as in anthers, sepals and flower tori.

It localises to the cell membrane. Lipid transfer protein involved in seed and ovule maturation and development, probably by regulating the fatty acids homeostasis during suberin and sporopollenin biosynthesis or deposition. Contributes to pre-invasive defense against some non-host powdery mildew pathogens by preventing the penetration of the epidermal cell wall by the fungal agents (e.g. Blumeria graminis f. sp. hordei (Bgh)). The protein is Non-specific lipid transfer protein GPI-anchored 5 of Arabidopsis thaliana (Mouse-ear cress).